The chain runs to 393 residues: Peptidyl-prolyl cis-trans isomerase CYP7 (393 aa).

The 189-residue stretch at 8 to 196 folds into the PPIase cyclophilin-type domain; sequence YLDISIDKKP…SDVRISDCGV (189 aa). 3 TPR repeats span residues 240–273, 292–325, and 330–363; these read ANIIKESGTLLFKKKDYSNAFFKYRKSLNYINEY, MKIYLNLSLVLFNLERYDDAIMYATYLLEMDNVP, and AKAYYRRGNSYLKKKRLDEALQDYIFCKEKNPDD.

As to quaternary structure, interacts with RPD3 and CNS1.

The enzyme catalyses [protein]-peptidylproline (omega=180) = [protein]-peptidylproline (omega=0). In terms of biological role, PPIases accelerate the folding of proteins. It catalyzes the cis-trans isomerization of proline imidic peptide bonds in oligopeptides. Plays a major role in negative regulation of the heat shock transcription factor (HSF). This chain is Peptidyl-prolyl cis-trans isomerase CYP7 (CPR7), found in Saccharomyces cerevisiae (strain ATCC 204508 / S288c) (Baker's yeast).